The sequence spans 328 residues: DNA-directed RNA polymerase subunit alpha (328 aa).

The interval 1 to 232 is alpha N-terminal domain (alpha-NTD); it reads MSTQGFLKPR…DQISVFAALE (232 aa). The segment at 248 to 328 is alpha C-terminal domain (alpha-CTD); the sequence is IDPVLLRPVD…NWPPLGLERP (81 aa).

This sequence belongs to the RNA polymerase alpha chain family. In terms of assembly, homodimer. The RNAP catalytic core consists of 2 alpha, 1 beta, 1 beta' and 1 omega subunit. When a sigma factor is associated with the core the holoenzyme is formed, which can initiate transcription.

The catalysed reaction is RNA(n) + a ribonucleoside 5'-triphosphate = RNA(n+1) + diphosphate. Its function is as follows. DNA-dependent RNA polymerase catalyzes the transcription of DNA into RNA using the four ribonucleoside triphosphates as substrates. In Bordetella bronchiseptica (strain ATCC BAA-588 / NCTC 13252 / RB50) (Alcaligenes bronchisepticus), this protein is DNA-directed RNA polymerase subunit alpha.